The primary structure comprises 355 residues: Probable poly-beta-1,6-N-acetyl-D-glucosamine export protein (355 aa).

10 helical membrane passes run 13–30 (AFICVIIIVTHLLTQITL), 45–67 (YIRNIFIFGTPSFIILSQLLTTL), 74–96 (INYLFSRFKYIFIPYLLIGLFYS), 116–138 (VLGQWYGYFIIIIMQFFVLSYII), 145–167 (LFNSKILLLLAFIVQQSYLHYFL), 187–204 (MILGWIFYFFLGGYIGYN), 211–233 (FLEKYLIIVIMLTLGAYVLFIAV), 243–262 (SFTYTLTLYNSVMFFLLLGV), 269–291 (MLLNTIKAISAFSFFIYLLHPII), and 306–328 (TIVFLAISLLMILGICIGVGMML).

The protein belongs to the acyltransferase 3 family.

Its subcellular location is the cell membrane. In terms of biological role, presumably involved in the export of the biofilm adhesin polysaccharide poly-beta-1,6-N-acetyl-D-glucosamine (PNAG, also referred to as PIA) across the cell membrane. This Staphylococcus epidermidis protein is Probable poly-beta-1,6-N-acetyl-D-glucosamine export protein (icaC).